The primary structure comprises 427 residues: Serine--tRNA ligase (427 aa).

231–233 (TAE) is an L-serine binding site. 262-264 (RSE) lines the ATP pocket. L-serine is bound at residue Glu285. 349-352 (EISS) serves as a coordination point for ATP. Residue Ser385 participates in L-serine binding.

It belongs to the class-II aminoacyl-tRNA synthetase family. Type-1 seryl-tRNA synthetase subfamily. In terms of assembly, homodimer. The tRNA molecule binds across the dimer.

It is found in the cytoplasm. It carries out the reaction tRNA(Ser) + L-serine + ATP = L-seryl-tRNA(Ser) + AMP + diphosphate + H(+). The enzyme catalyses tRNA(Sec) + L-serine + ATP = L-seryl-tRNA(Sec) + AMP + diphosphate + H(+). The protein operates within aminoacyl-tRNA biosynthesis; selenocysteinyl-tRNA(Sec) biosynthesis; L-seryl-tRNA(Sec) from L-serine and tRNA(Sec): step 1/1. Catalyzes the attachment of serine to tRNA(Ser). Is also able to aminoacylate tRNA(Sec) with serine, to form the misacylated tRNA L-seryl-tRNA(Sec), which will be further converted into selenocysteinyl-tRNA(Sec). The chain is Serine--tRNA ligase from Rhizobium etli (strain ATCC 51251 / DSM 11541 / JCM 21823 / NBRC 15573 / CFN 42).